The primary structure comprises 308 residues: Tetraacyldisaccharide 4'-kinase (308 aa).

An ATP-binding site is contributed by 63–70; it reads SFGGNGKT.

The protein belongs to the LpxK family.

It carries out the reaction a lipid A disaccharide + ATP = a lipid IVA + ADP + H(+). It participates in glycolipid biosynthesis; lipid IV(A) biosynthesis; lipid IV(A) from (3R)-3-hydroxytetradecanoyl-[acyl-carrier-protein] and UDP-N-acetyl-alpha-D-glucosamine: step 6/6. Its function is as follows. Transfers the gamma-phosphate of ATP to the 4'-position of a tetraacyldisaccharide 1-phosphate intermediate (termed DS-1-P) to form tetraacyldisaccharide 1,4'-bis-phosphate (lipid IVA). The sequence is that of Tetraacyldisaccharide 4'-kinase from Campylobacter jejuni subsp. doylei (strain ATCC BAA-1458 / RM4099 / 269.97).